The sequence spans 510 residues: ATP synthase subunit alpha (510 aa).

169–176 (GDRQTGKT) contributes to the ATP binding site.

Belongs to the ATPase alpha/beta chains family. As to quaternary structure, F-type ATPases have 2 components, CF(1) - the catalytic core - and CF(0) - the membrane proton channel. CF(1) has five subunits: alpha(3), beta(3), gamma(1), delta(1), epsilon(1). CF(0) has three main subunits: a(1), b(2) and c(9-12). The alpha and beta chains form an alternating ring which encloses part of the gamma chain. CF(1) is attached to CF(0) by a central stalk formed by the gamma and epsilon chains, while a peripheral stalk is formed by the delta and b chains.

The protein localises to the cell inner membrane. It catalyses the reaction ATP + H2O + 4 H(+)(in) = ADP + phosphate + 5 H(+)(out). Produces ATP from ADP in the presence of a proton gradient across the membrane. The alpha chain is a regulatory subunit. The sequence is that of ATP synthase subunit alpha from Nitrobacter hamburgensis (strain DSM 10229 / NCIMB 13809 / X14).